The sequence spans 331 residues: Glycerophosphodiester phosphodiesterase 1 (331 aa).

The Cytoplasmic segment spans residues 1 to 3 (MWL). The helical transmembrane segment at 4 to 24 (WEDQGGLLGPFSFLLLVLLLV) threads the bilayer. The Lumenal portion of the chain corresponds to 25 to 247 (TRSPVNACLL…KPRYDTFWKH (223 aa)). Positions 65–331 (ISAIAHRGGS…SMVEDCEPHF (267 aa)) constitute a GP-PDE domain. The Mg(2+) site is built by Glu97 and Asp99. Residue Asn168 is glycosylated (N-linked (GlcNAc...) asparagine). Asp174 serves as a coordination point for Mg(2+). Residue Asn198 is glycosylated (N-linked (GlcNAc...) asparagine). The helical transmembrane segment at 248-268 (FIFVMMDILLDWSMHNILWYL) threads the bilayer. Residues 269 to 331 (CGISAFLMQK…SMVEDCEPHF (63 aa)) lie on the Cytoplasmic side of the membrane.

It belongs to the glycerophosphoryl diester phosphodiesterase family. As to quaternary structure, interacts with PRAF2. Interacts with RGS16. The cofactor is Mg(2+). In terms of processing, N-glycosylated. In terms of tissue distribution, widely expressed.

The protein localises to the cell membrane. The protein resides in the cytoplasmic vesicle membrane. The catalysed reaction is sn-glycero-3-phospho-1D-myo-inositol + H2O = myo-inositol + sn-glycerol 3-phosphate + H(+). The enzyme catalyses 1-O-(1Z-octadecenyl)-sn-glycero-3-phospho-(N-5Z,8Z,11Z,14Z-eicosatetraenoyl)-ethanolamine + H2O = 1-O-(1Z-octadecenyl)-sn-glycero-3-phosphate + N-(5Z,8Z,11Z,14Z-eicosatetraenoyl)-ethanolamine + H(+). It carries out the reaction 1-O-(1Z-octadecenyl)-sn-glycero-3-phospho-(N-9Z-octadecenoyl)-ethanolamine + H2O = 1-O-(1Z-octadecenyl)-sn-glycero-3-phosphate + N-(9Z-octadecenoyl) ethanolamine + H(+). It catalyses the reaction 1-O-(1Z-octadecenyl)-sn-glycero-3-phospho-N-hexadecanoyl-ethanolamine + H2O = 1-O-(1Z-octadecenyl)-sn-glycero-3-phosphate + N-hexadecanoylethanolamine + H(+). The catalysed reaction is N-(4Z,7Z,10Z,13Z,16Z,19Z)-docosahexaenoyl-sn-glycero-3-phosphoethanolamine + H2O = N-(4Z,7Z,10Z,13Z,16Z,19Z)-docosahexaenoyl ethanolamine + sn-glycerol 3-phosphate + H(+). The enzyme catalyses N-eicosanoyl-sn-glycero-3-phosphoethanolamine + H2O = N-eicosanoyl ethanolamine + sn-glycerol 3-phosphate + H(+). It carries out the reaction N-hexadecanoyl-sn-glycero-3-phosphoethanolamine + H2O = N-hexadecanoylethanolamine + sn-glycerol 3-phosphate + H(+). It catalyses the reaction N-(9Z-octadecenoyl)-sn-glycero-3-phosphoethanolamine + H2O = N-(9Z-octadecenoyl) ethanolamine + sn-glycerol 3-phosphate + H(+). The catalysed reaction is N-(5Z,8Z,11Z,14Z-eicosatetraenoyl)-sn-glycero-3-phosphoethanolamine + H2O = N-(5Z,8Z,11Z,14Z-eicosatetraenoyl)-ethanolamine + sn-glycerol 3-phosphate + H(+). With respect to regulation, inhibited by EDTA, calcium chloride, and zinc chloride. Enhanced by magnesium chloride. Glycerophosphodiester phosphodiesterase activity can be modulated by G-protein signaling pathways. Functionally, hydrolyzes the phosphodiester bond of glycerophosphodiesters such as glycerophosphoinositol (GroPIns) and glycerophosphoethanolamine (GroPEth), to yield a glycerol phosphate and an alcohol. Hydrolyzes glycerophospho-N-acylethanolamines to N-acylethanolamines in the brain and participates in bioactive N-acylethanolamine biosynthesis such as anandamide (an endocannabinoid), N-palmitoylethanolamine (an anti-inflammatory), and N-oleoylethanolamine (an anorexic). In addition, has a lysophospholipase D activity by hydrolyzing N-acyl-lysoplasmenylethanolamine (N-acyl-lysoPlsEt) to N-acylethanolamine. However lysophospholipase D activity is lower than glycerophosphodiester phosphodiesterase activity. Has little or no activity towards glycerophosphocholine. The sequence is that of Glycerophosphodiester phosphodiesterase 1 from Homo sapiens (Human).